A 456-amino-acid chain; its full sequence is Argininosuccinate lyase (456 aa).

The protein belongs to the lyase 1 family. Argininosuccinate lyase subfamily.

The protein resides in the cytoplasm. It catalyses the reaction 2-(N(omega)-L-arginino)succinate = fumarate + L-arginine. It functions in the pathway amino-acid biosynthesis; L-arginine biosynthesis; L-arginine from L-ornithine and carbamoyl phosphate: step 3/3. The protein is Argininosuccinate lyase of Listeria monocytogenes serotype 4b (strain F2365).